Here is a 293-residue protein sequence, read N- to C-terminus: Deubiquitinase OTUD6B (293 aa).

Residue methionine 1 is modified to N-acetylmethionine. One can recognise an OTU domain in the interval 147–284 (LEIKQIPSDG…GEHYNSVTRL (138 aa)). Residues 152-158 (IPSDGHC) are cys-loop. Aspartate 155 is a catalytic residue. Cysteine 158 acts as the Nucleophile in catalysis. A variable-loop region spans residues 219–229 (IVNTAAWGGQL). Residues 267–277 (YMRHAYGLGEH) are his-loop. Histidine 277 is a catalytic residue.

As to quaternary structure, interacts with the eukaryotic translation initiation factor 4F complex.

It carries out the reaction Thiol-dependent hydrolysis of ester, thioester, amide, peptide and isopeptide bonds formed by the C-terminal Gly of ubiquitin (a 76-residue protein attached to proteins as an intracellular targeting signal).. In terms of biological role, deubiquitinating enzyme that may play a role in the ubiquitin-dependent regulation of protein synthesis, downstream of mTORC1. May associate with the protein synthesis initiation complex and modify its ubiquitination to repress translation. May also repress DNA synthesis and modify different cellular targets thereby regulating cell growth and proliferation. May also play a role in proteasome assembly and function. Functionally, stimulates protein synthesis. Influences the expression of CCND1/cyclin D1 by promoting its translation and regulates MYC/c-Myc protein stability. This chain is Deubiquitinase OTUD6B, found in Homo sapiens (Human).